The primary structure comprises 620 residues: Arginine--tRNA ligase (620 aa).

Positions 147–157 match the 'HIGH' region motif; that stretch reads ANPTGPIHIGG.

Belongs to the class-I aminoacyl-tRNA synthetase family. In terms of assembly, monomer.

The protein resides in the cytoplasm. The enzyme catalyses tRNA(Arg) + L-arginine + ATP = L-arginyl-tRNA(Arg) + AMP + diphosphate. This is Arginine--tRNA ligase from Bifidobacterium longum (strain DJO10A).